A 356-amino-acid chain; its full sequence is MGSLEKERTTTGWAARDPSGVLSPYTYSLRNTGPEDLYIKVLSCGICHSDIHQIKNDLGMSHYPMVPGHEVVGEVLEVGSEVTKYRVGDRVGTGIVVGCCRSCSPCNSDQEQYCNKKIWNYNDVYTDGKPTQGGFAGEIVVGERFVVKIPDGLESEQAAPLMCAGVTVYSPLVRFGLKQSGLRGGILGLGGVGHMGVKIAKAMGHHVTVISSSDKKRTEALEHLGADAYLVSSDENGMKEATDSLDYIFDTIPVVHPLEPYLALLKLDGKLILTGVINAPLQFISPMVMLGRKSITGSFIGSMKETEEMLEFCKEKGLTSQIEVIKMDYVNTALERLEKNDVRYRFVVDVVGSKLD.

Position 47 (Cys-47) interacts with Zn(2+). Ser-49 lines the NADP(+) pocket. Zn(2+)-binding residues include His-69, Glu-70, Cys-100, Cys-103, Cys-106, Cys-114, and Cys-163. Residues Thr-167, 188–193 (GLGGVG), 211–216 (SSSDKK), Thr-251, Gly-275, and 298–300 (SFI) contribute to the NADP(+) site.

It belongs to the zinc-containing alcohol dehydrogenase family. As to quaternary structure, homodimer. The cofactor is Zn(2+).

The catalysed reaction is (E)-cinnamyl alcohol + NADP(+) = (E)-cinnamaldehyde + NADPH + H(+). The enzyme catalyses (E)-coniferol + NADP(+) = (E)-coniferaldehyde + NADPH + H(+). It carries out the reaction (E)-sinapyl alcohol + NADP(+) = (E)-sinapaldehyde + NADPH + H(+). It catalyses the reaction (E)-4-coumaroyl alcohol + NADP(+) = (E)-4-coumaraldehyde + NADPH + H(+). The catalysed reaction is (E)-caffeyl alcohol + NADP(+) = (E)-caffeyl aldehyde + NADPH + H(+). Its pathway is aromatic compound metabolism; phenylpropanoid biosynthesis. In terms of biological role, involved in lignin biosynthesis. Catalyzes the final step specific for the production of lignin monomers. Catalyzes the NADPH-dependent reduction of coniferaldehyde, 5-hydroxyconiferaldehyde, sinapaldehyde, 4-coumaraldehyde and caffeyl aldehyde to their respective alcohols. The chain is Probable cinnamyl alcohol dehydrogenase (CAD) from Eucalyptus globulus (Tasmanian blue gum).